A 474-amino-acid polypeptide reads, in one-letter code: Coiled-coil domain-containing protein 6 (474 aa).

A compositionally biased stretch (acidic residues) spans 1–10; sequence MADSASESDT. The tract at residues 1 to 47 is disordered; it reads MADSASESDTDGAGGNSSSSAAMQSSCSSTSGGGGGGGGGGGGGKSG. Residue Ala2 is modified to N-acetylalanine. The segment covering 16-30 has biased composition (low complexity); sequence NSSSSAAMQSSCSST. A compositionally biased stretch (gly residues) spans 31–47; the sequence is SGGGGGGGGGGGGGKSG. The residue at position 52 (Ser52) is a Phosphoserine. A coiled-coil region spans residues 53-237; it reads PFRLEELTNR…KRILQEKLDQ (185 aa). 3 consecutive repeat copies span residues 106 to 134, 135 to 163, and 164 to 192. The 5 X 29 AA tandem repeats stretch occupies residues 106 to 235; sequence EQEEEFISNT…AEKRILQEKL (130 aa). Residues 193-206 form a 4; approximate repeat; the sequence is EQLRREKIDLENTL. Residues 207–235 form repeat 5; it reads EQEQEALVNRLWKRMDKLEAEKRILQEKL. 6 positions are modified to phosphoserine: Ser240, Ser244, Ser249, Ser254, Ser284, and Ser323. Positions 253–332 form a coiled coil; sequence DSPENMMRHI…SESESSLEMD (80 aa). Residues 342–369 form a disordered region; it reads AQGLRPRTVSSPIPYTPSPSSSRPISPG. Thr349 carries the phosphothreonine modification. Low complexity predominate over residues 351 to 368; that stretch reads SSPIPYTPSPSSSRPISP. A phosphoserine mark is found at Ser363 and Ser367. Arg387 carries the omega-N-methylarginine modification. Phosphoserine is present on residues Ser395 and Ser413. Positions 397-474 are disordered; the sequence is GLHVQHMGTS…QHSAHPSSQP (78 aa). Positions 426–451 are enriched in pro residues; sequence PTPPPSPNTQTPVQPPPPPPPPPMQP. An SH3-binding motif is present at residues 442–451; the sequence is PPPPPPPMQP. Over residues 459-474 the composition is skewed to low complexity; the sequence is SQPTPSQHSAHPSSQP.

Ubiquitously expressed.

It localises to the cytoplasm. The protein resides in the cytoskeleton. The polypeptide is Coiled-coil domain-containing protein 6 (CCDC6) (Homo sapiens (Human)).